Here is a 396-residue protein sequence, read N- to C-terminus: Elongation factor Tu (396 aa).

The region spanning 10–206 (KPHVNIGTIG…AVDEYIPDPV (197 aa)) is the tr-type G domain. A G1 region spans residues 19 to 26 (GHVDHGKT). Residue 19-26 (GHVDHGKT) coordinates GTP. A Mg(2+)-binding site is contributed by Thr-26. The segment at 62 to 66 (GITIN) is G2. The segment at 83 to 86 (DAPG) is G3. GTP-binding positions include 83–87 (DAPGH) and 138–141 (NKSD). A G4 region spans residues 138–141 (NKSD). The G5 stretch occupies residues 176–178 (SGL).

Belongs to the TRAFAC class translation factor GTPase superfamily. Classic translation factor GTPase family. EF-Tu/EF-1A subfamily. In terms of assembly, monomer.

The protein localises to the cytoplasm. It carries out the reaction GTP + H2O = GDP + phosphate + H(+). In terms of biological role, GTP hydrolase that promotes the GTP-dependent binding of aminoacyl-tRNA to the A-site of ribosomes during protein biosynthesis. In Micrococcus luteus (strain ATCC 4698 / DSM 20030 / JCM 1464 / CCM 169 / CCUG 5858 / IAM 1056 / NBRC 3333 / NCIMB 9278 / NCTC 2665 / VKM Ac-2230) (Micrococcus lysodeikticus), this protein is Elongation factor Tu.